We begin with the raw amino-acid sequence, 520 residues long: Transposase for insertion sequence element IS21-like (520 aa).

The 66-residue stretch at 13 to 78 (YMWYKVRELQ…KYEEYVRGTL (66 aa)) folds into the HTH IS21-type domain. An Integrase catalytic domain is found at 136 to 312 (LPETPYGEYA…VPSEEFAVEK (177 aa)).

It belongs to the transposase IS21/IS408/IS1162 family.

Involved in the transposition of the insertion sequence. The polypeptide is Transposase for insertion sequence element IS21-like (tnpA) (Bacteroides fragilis).